We begin with the raw amino-acid sequence, 302 residues long: MSDALVMAGEPLMSGNCFSQMHPVFKAFVCGSLSGTCSTLLFQPLDLVKTRLQAHQLSASAAGSRPRMLNLFIKVIRNENILGLWRGVSPSFLRCIPGVGLYFSTLYTLKHHFFSERDPKPLESVMLGAGSRTVAAVCMLPFTVVKTRYESGKYGYKSVYGALKNIYKTEGPRGLFSGLTATLMRDAPFSGIYLMFYTRAKKLVPQDQIDPLFSPVLNFGCGIVAGILASVATQPADVIKTHIQLSHEKCHWTGQVALNIYQNHGLTGFFRGGLPRALRRTLMAAMAWTVYEQMMEKMGLKS.

3 Solcar repeats span residues 22-112, 119-203, and 213-297; these read HPVF…LKHH, PKPL…AKKL, and FSPV…MMEK. Transmembrane regions (helical) follow at residues 28–53, 87–113, 125–150, 178–201, 217–243, and 272–290; these read FVCG…TRLQ, GVSP…KHHF, VMLG…TRYE, GLTA…TRAK, LNFG…KTHI, and GGLP…AWTV.

Belongs to the mitochondrial carrier (TC 2.A.29) family. SLC25A38 subfamily.

It is found in the mitochondrion inner membrane. It carries out the reaction glycine(in) = glycine(out). Its function is as follows. Mitochondrial glycine transporter that imports glycine into the mitochondrial matrix. Plays an important role in providing glycine for the first enzymatic step in heme biosynthesis, the condensation of glycine with succinyl-CoA to produce 5-aminolevulinate (ALA) in the mitochondrial matrix. Required during erythropoiesis. Functionally, may play a role as pro-apoptotic protein that induces caspase-dependent apoptosis. This is Mitochondrial glycine transporter from Xenopus tropicalis (Western clawed frog).